A 203-amino-acid chain; its full sequence is WUSCHEL-related homeobox 3 (203 aa).

The segment at residues 4–68 (TPSTRWCPTP…NHKARERQRL (65 aa)) is a DNA-binding region (homeobox; WUS-type). 3 disordered regions span residues 73–95 (CARH…TAAA), 109–135 (LHHH…QQQQ), and 180–203 (STSG…TSTN). Positions 80–91 (PSPPSSTVPPAP) are enriched in pro residues. Residues 109–118 (LHHHHHHHHP) show a composition bias toward basic residues. Composition is skewed to low complexity over residues 119-135 (YAAA…QQQQ) and 190-203 (CSSS…TSTN).

It belongs to the WUS homeobox family.

Its subcellular location is the nucleus. In terms of biological role, transcription factor which may be involved in developmental processes. This chain is WUSCHEL-related homeobox 3 (WOX3), found in Oryza sativa subsp. indica (Rice).